Consider the following 265-residue polypeptide: 4-hydroxy-tetrahydrodipicolinate reductase (265 aa).

Residues 7–12 (GASGRM) and Asp-33 each bind NAD(+). Arg-34 is a binding site for NADP(+). Residues 96 to 98 (GTT) and 120 to 123 (AANM) contribute to the NAD(+) site. Residue His-153 is the Proton donor/acceptor of the active site. Residue His-154 participates in (S)-2,3,4,5-tetrahydrodipicolinate binding. Lys-157 serves as the catalytic Proton donor. 163–164 (GT) serves as a coordination point for (S)-2,3,4,5-tetrahydrodipicolinate.

Belongs to the DapB family.

The protein resides in the cytoplasm. The enzyme catalyses (S)-2,3,4,5-tetrahydrodipicolinate + NAD(+) + H2O = (2S,4S)-4-hydroxy-2,3,4,5-tetrahydrodipicolinate + NADH + H(+). The catalysed reaction is (S)-2,3,4,5-tetrahydrodipicolinate + NADP(+) + H2O = (2S,4S)-4-hydroxy-2,3,4,5-tetrahydrodipicolinate + NADPH + H(+). It participates in amino-acid biosynthesis; L-lysine biosynthesis via DAP pathway; (S)-tetrahydrodipicolinate from L-aspartate: step 4/4. Its function is as follows. Catalyzes the conversion of 4-hydroxy-tetrahydrodipicolinate (HTPA) to tetrahydrodipicolinate. The chain is 4-hydroxy-tetrahydrodipicolinate reductase from Burkholderia orbicola (strain MC0-3).